Consider the following 515-residue polypeptide: Envelope glycoprotein (515 aa).

An N-terminal signal peptide occupies residues 1-33 (MPKERRSRRRPQPIIRWVSLTLTLLALCQPIQT). The Extracellular segment spans residues 34–436 (WRCSLSLGNQ…GLTAWVRETI (403 aa)). Residues N129 and N203 are each glycosylated (N-linked (GlcNAc...) asparagine; by host). The CXXC signature appears at 212–215 (CAIC). 3 cysteine pairs are disulfide-bonded: C212/C215, C212/C392, and C384/C391. N230, N251, N256, N271, and N287 each carry an N-linked (GlcNAc...) asparagine; by host glycan. The fusion peptide stretch occupies residues 304–324 (VAALTLGLALSVGLTGINVAV). Coiled coils occupy residues 330 to 376 (QRLT…WLYI) and 388 to 420 (NEPC…DWQW). The N-linked (GlcNAc...) asparagine; by host glycan is linked to N351. An immunosuppression region spans residues 365 to 381 (AQNRRGLDWLYIRLGFQ). The CX6CC motif lies at 384-392 (CPTINEPCC). N398 carries N-linked (GlcNAc...) asparagine; by host glycosylation. Residues 437–457 (HSVLSLFLLALFLLFLAPCLI) form a helical membrane-spanning segment. A lipid anchor (S-palmitoyl cysteine; by host) is attached at C455. Over 458 to 515 (KCLTSRLLKLLRQAPHFPEISFPPKPDSDYQALLPSAPEIYSHLSPTKPDYINLRPCP) the chain is Cytoplasmic.

As to quaternary structure, the mature envelope protein (Env) consists of a trimer of SU-TM heterodimers attached by a labile interchain disulfide bond. In terms of processing, specific enzymatic cleavages in vivo yield mature proteins. Envelope glycoproteins are synthesized as an inactive precursor that is N-glycosylated and processed likely by host cell furin or by a furin-like protease in the Golgi to yield the mature SU and TM proteins. The cleavage site between SU and TM requires the minimal sequence [KR]-X-[KR]-R. The CXXC motif is highly conserved across a broad range of retroviral envelope proteins. It is thought to participate in the formation of a labile disulfide bond possibly with the CX6CC motif present in the transmembrane protein. Isomerization of the intersubunit disulfide bond to an SU intrachain disulfide bond is thought to occur upon receptor recognition in order to allow membrane fusion. Post-translationally, the transmembrane protein is palmitoylated.

Its subcellular location is the virion membrane. It localises to the host cell membrane. Its function is as follows. The surface protein (SU) attaches the virus to the host cell by binding to its receptor. This interaction triggers the refolding of the transmembrane protein (TM) and is thought to activate its fusogenic potential by unmasking its fusion peptide. Fusion occurs at the host cell plasma membrane. In terms of biological role, the transmembrane protein (TM) acts as a class I viral fusion protein. Under the current model, the protein has at least 3 conformational states: pre-fusion native state, pre-hairpin intermediate state, and post-fusion hairpin state. During viral and target cell membrane fusion, the coiled coil regions (heptad repeats) assume a trimer-of-hairpins structure, positioning the fusion peptide in close proximity to the C-terminal region of the ectodomain. The formation of this structure appears to drive apposition and subsequent fusion of viral and target cell membranes. Membranes fusion leads to delivery of the nucleocapsid into the cytoplasm. This Bos taurus (Bovine) protein is Envelope glycoprotein (env).